A 286-amino-acid chain; its full sequence is Cytochrome c oxidase subunit 3 (286 aa).

The next 8 helical transmembrane spans lie at 13-33, 40-60, 85-105, 133-153, 173-195, 199-221, 223-243, and 253-273; these read GVFL…GVVI, VGTF…CFLI, IIQY…VVFF, IILD…NIIL, LCRE…LLFI, VWEF…LFSI, TLHF…IFNI, and IVLI…WFFL.

This sequence belongs to the cytochrome c oxidase subunit 3 family. As to quaternary structure, component of the cytochrome c oxidase (complex IV, CIV), a multisubunit enzyme composed of a catalytic core of 3 subunits and several supernumerary subunits. The complex exists as a monomer or a dimer and forms supercomplexes (SCs) in the inner mitochondrial membrane with ubiquinol-cytochrome c oxidoreductase (cytochrome b-c1 complex, complex III, CIII).

It localises to the mitochondrion inner membrane. It catalyses the reaction 4 Fe(II)-[cytochrome c] + O2 + 8 H(+)(in) = 4 Fe(III)-[cytochrome c] + 2 H2O + 4 H(+)(out). Component of the cytochrome c oxidase, the last enzyme in the mitochondrial electron transport chain which drives oxidative phosphorylation. The respiratory chain contains 3 multisubunit complexes succinate dehydrogenase (complex II, CII), ubiquinol-cytochrome c oxidoreductase (cytochrome b-c1 complex, complex III, CIII) and cytochrome c oxidase (complex IV, CIV), that cooperate to transfer electrons derived from NADH and succinate to molecular oxygen, creating an electrochemical gradient over the inner membrane that drives transmembrane transport and the ATP synthase. Cytochrome c oxidase is the component of the respiratory chain that catalyzes the reduction of oxygen to water. Electrons originating from reduced cytochrome c in the intermembrane space (IMS) are transferred via the dinuclear copper A center (CU(A)) of subunit 2 and heme A of subunit 1 to the active site in subunit 1, a binuclear center (BNC) formed by heme A3 and copper B (CU(B)). The BNC reduces molecular oxygen to 2 water molecules using 4 electrons from cytochrome c in the IMS and 4 protons from the mitochondrial matrix. The protein is Cytochrome c oxidase subunit 3 (COIII) of Trypanoplasma borreli.